The chain runs to 183 residues: 2-hydroxy-1,4-benzoquinone reductase (183 aa).

FMN-binding positions include 11-18 (SLRRDSFN), 77-80 (EYNR), and serine 113.

This sequence belongs to the SsuE family. As to quaternary structure, homotetramer. FMN is required as a cofactor.

The enzyme catalyses 2-hydroxy-1,4-benzoquinone + NADH + 2 H(+) = benzene-1,2,4-triol + NAD(+). Involved in the metabolism of 4-aminophenol. Catalyzes the reduction of the auto-oxidation product 2-hydroxy-1,4-benzoquinone back to hydroxyquinol. Has a broad substrate specificity toward benzoquinones, converting them to the corresponding 1,4-benzenediols. The polypeptide is 2-hydroxy-1,4-benzoquinone reductase (Burkholderia sp).